The primary structure comprises 130 residues: Small ribosomal subunit protein uS9 (130 aa).

The protein belongs to the universal ribosomal protein uS9 family.

This Polaromonas sp. (strain JS666 / ATCC BAA-500) protein is Small ribosomal subunit protein uS9.